We begin with the raw amino-acid sequence, 150 residues long: CCAAT/enhancer-binding protein gamma (150 aa).

Lys-3 participates in a covalent cross-link: Glycyl lysine isopeptide (Lys-Gly) (interchain with G-Cter in SUMO2). The segment at 27-94 (GLQQVPQLVP…QKAQDTLQRV (68 aa)) is disordered. The span at 28–37 (LQQVPQLVPA) shows a compositional bias: low complexity. Residues 56–72 (SPMDRNSDEYRQRRERN) show a composition bias toward basic and acidic residues. The bZIP domain maps to 62–125 (SDEYRQRRER…SVLKDLFLEH (64 aa)). The segment at 66 to 93 (RQRRERNNMAVKKSRLKSKQKAQDTLQR) is basic motif. The segment at 97–118 (LKEENERLEAKIKLLTKELSVL) is leucine-zipper.

Belongs to the bZIP family. C/EBP subfamily. Binds DNA as a dimer and can form stable heterodimers with CEBPA and CEBPB. Interacts with ZNF638; this interaction increases transcriptional activation.

The protein localises to the nucleus. Its function is as follows. Transcription factor that binds to the promoter and the enhancer regions of target genes. Binds to the enhancer element PRE-I (positive regulatory element-I) of the IL-4 gene. Binds to the promoter and the enhancer of the immunoglobulin heavy chain. Binds to GPE1, a cis-acting element in the G-CSF gene promoter. The polypeptide is CCAAT/enhancer-binding protein gamma (CEBPG) (Homo sapiens (Human)).